Here is a 391-residue protein sequence, read N- to C-terminus: Chaperone protein DnaJ (391 aa).

The J domain maps to 2–67; sequence DYYDVLGVSK…QKRESYDRYG (66 aa). The CR-type zinc finger occupies 148–226; it reads GVKKELLVSG…CRGQGRIKDK (79 aa). The Zn(2+) site is built by Cys161, Cys164, Cys178, Cys181, Cys200, Cys203, Cys214, and Cys217. CXXCXGXG motif repeat units lie at residues 161–168, 178–185, 200–207, and 214–221; these read CETCSGSG, CDRCKGSG, CPECGGEG, and CSSCRGQG.

The protein belongs to the DnaJ family. As to quaternary structure, homodimer. Zn(2+) serves as cofactor.

The protein localises to the cytoplasm. In terms of biological role, participates actively in the response to hyperosmotic and heat shock by preventing the aggregation of stress-denatured proteins and by disaggregating proteins, also in an autonomous, DnaK-independent fashion. Unfolded proteins bind initially to DnaJ; upon interaction with the DnaJ-bound protein, DnaK hydrolyzes its bound ATP, resulting in the formation of a stable complex. GrpE releases ADP from DnaK; ATP binding to DnaK triggers the release of the substrate protein, thus completing the reaction cycle. Several rounds of ATP-dependent interactions between DnaJ, DnaK and GrpE are required for fully efficient folding. Also involved, together with DnaK and GrpE, in the DNA replication of plasmids through activation of initiation proteins. The protein is Chaperone protein DnaJ of Chlamydia abortus (strain DSM 27085 / S26/3) (Chlamydophila abortus).